Consider the following 209-residue polypeptide: Peptide methionine sulfoxide reductase MsrA (209 aa).

Cys51 is an active-site residue.

Belongs to the MsrA Met sulfoxide reductase family.

It carries out the reaction L-methionyl-[protein] + [thioredoxin]-disulfide + H2O = L-methionyl-(S)-S-oxide-[protein] + [thioredoxin]-dithiol. The catalysed reaction is [thioredoxin]-disulfide + L-methionine + H2O = L-methionine (S)-S-oxide + [thioredoxin]-dithiol. Its function is as follows. Has an important function as a repair enzyme for proteins that have been inactivated by oxidation. Catalyzes the reversible oxidation-reduction of methionine sulfoxide in proteins to methionine. This is Peptide methionine sulfoxide reductase MsrA from Vibrio vulnificus (strain CMCP6).